The following is a 495-amino-acid chain: Probable leucine aminopeptidase 2 (495 aa).

Positions 1–21 (MKSQLLSLAVAVTTISQGVVG) are cleaved as a signal peptide. Residues 130–216 (MAELVVAKNN…SQEDGKNLAT (87 aa)) form the PA domain. N-linked (GlcNAc...) asparagine glycans are attached at residues Asn-142 and Asn-235. Positions 259 and 271 each coordinate Zn(2+). N-linked (GlcNAc...) asparagine glycosylation occurs at Asn-272. Glu-303 acts as the Proton acceptor in catalysis. Zn(2+) contacts are provided by Glu-304 and Asp-332. Asn-352 carries an N-linked (GlcNAc...) asparagine glycan. His-430 serves as a coordination point for Zn(2+).

It belongs to the peptidase M28 family. M28A subfamily. As to quaternary structure, monomer. It depends on Zn(2+) as a cofactor.

Its subcellular location is the secreted. Its function is as follows. Extracellular aminopeptidase that releases a wide variety of amino acids from natural peptides and contributes to pathogenicity. This Trichophyton verrucosum (strain HKI 0517) protein is Probable leucine aminopeptidase 2 (LAP2).